We begin with the raw amino-acid sequence, 591 residues long: MLMMVIRIYIHKRLNAKDYNNFYTSIGDFGYTIPGSDAPQYNIESDSEHYLNFGIAHINFNNGTNNQITNPNPEVYTRFYIQMKTPDGQDRIVYEAENANAISFLIRSTYHKPMSGLVGGFRFDPLLGIRVYKDSFVLADELARIQSEFTTVYGNSGINVTENTTNYSVRMYWESAVVVEPGEPSPENPIPWLSNLPNITDGNPENIDGQWGNVTGFNYNPTTKLFNADVIYDGNSYPIRDAVVASNDDSFLTRTEKAYYFTQGGQKFLYLNFSKDIDSFMFKNHYSELKNWVGHALWNLSTGEVNVMEQLKVFQYLKFTEDNELMAYFYIVDTPVDDLISVTSNVAYRYWKPTWFGLGPKEPGPIQNKIITAAQGEFNSIRPTWVKPVYLGSYFAGASGLVIAGSALIKGGSPWFGLGLAGVGILAGGILQYADDNEWLNYDIAQVQKLEPNVNIRSEISEAYFNAYGQMFPSTLGQSLYRISYGQFDQSDLQVISDKSDVITVVFETDGITHTYQKDQIDDTWDGPATEIPLGVDGILPEWALWLITIVIGLFALSNLQKIFDTIKKKPIISIIVVIAILYALTYFNLL.

A run of 4 helical transmembrane segments spans residues 389–409, 411–431, 538–558, and 571–591; these read VYLGSYFAGASGLVIAGSALI, GGSPWFGLGLAGVGILAGGIL, GILPEWALWLITIVIGLFALS, and PIISIIVVIAILYALTYFNLL.

The protein resides in the membrane. This is an uncharacterized protein from Mycoplasma (Bacteriophage L2).